The primary structure comprises 337 residues: Cytidine deaminase 2 (337 aa).

2 consecutive CMP/dCMP-type deaminase domains span residues 43–164 (TDPI…FSSL) and 199–320 (LDCS…LKYL). Substrate is bound at residue 84–86 (NVD). His97 serves as a coordination point for Zn(2+). The Proton donor role is filled by Glu99. Cys132 and Cys135 together coordinate Zn(2+).

Belongs to the cytidine and deoxycytidylate deaminase family. Homodimer. It depends on Zn(2+) as a cofactor.

It carries out the reaction cytidine + H2O + H(+) = uridine + NH4(+). The enzyme catalyses 2'-deoxycytidine + H2O + H(+) = 2'-deoxyuridine + NH4(+). In terms of biological role, this enzyme scavenges exogenous and endogenous cytidine and 2'-deoxycytidine for UMP synthesis. This chain is Cytidine deaminase 2 (CDA2), found in Arabidopsis thaliana (Mouse-ear cress).